Here is a 149-residue protein sequence, read N- to C-terminus: Small ribosomal subunit protein bS18c (149 aa).

Positions 1 to 23 (MDKITGPFRKSKKSFRKPLPPIQ) are disordered.

Belongs to the bacterial ribosomal protein bS18 family. In terms of assembly, part of the 30S ribosomal subunit.

Its subcellular location is the plastid. In Cuscuta obtusiflora (Peruvian dodder), this protein is Small ribosomal subunit protein bS18c.